Reading from the N-terminus, the 333-residue chain is Transcription factor TGA2.2 (333 aa).

Over residues 1 to 14 (MADASSRTDTSTVL) the composition is skewed to polar residues. Residues 1–48 (MADASSRTDTSTVLDTDDKNQMVDGQSGAIVPSNSSDRSDRSDKPMDQ) form a disordered region. Basic and acidic residues predominate over residues 37–48 (DRSDRSDKPMDQ). A bZIP domain is found at 47–91 (DQKVLRRLAQNREAARKSRLRKKAYVQQLESSKLKLASLEQEINK). Positions 49–69 (KVLRRLAQNREAARKSRLRKK) are basic motif. The segment at 75 to 89 (LESSKLKLASLEQEI) is leucine-zipper. In terms of domain architecture, DOG1 spans 114–330 (AMTFDLEYAR…RALSSLWLAR (217 aa)).

This sequence belongs to the bZIP family. Interacts with NPR1/NH1. Interacts with NPR3/NH3.

It is found in the nucleus. In terms of biological role, transcriptional regulator involved in defense response. This chain is Transcription factor TGA2.2, found in Oryza sativa subsp. japonica (Rice).